The sequence spans 327 residues: Ribose-phosphate pyrophosphokinase (327 aa).

Position 51–53 (51–53) interacts with ATP; sequence DGE. Mg(2+) is bound by residues histidine 144 and aspartate 183. Residue lysine 207 is part of the active site. Residues arginine 209, aspartate 233, and 237–241 contribute to the D-ribose 5-phosphate site; that span reads DTGGT.

This sequence belongs to the ribose-phosphate pyrophosphokinase family. Class I subfamily. Homohexamer. Requires Mg(2+) as cofactor.

It localises to the cytoplasm. The catalysed reaction is D-ribose 5-phosphate + ATP = 5-phospho-alpha-D-ribose 1-diphosphate + AMP + H(+). The protein operates within metabolic intermediate biosynthesis; 5-phospho-alpha-D-ribose 1-diphosphate biosynthesis; 5-phospho-alpha-D-ribose 1-diphosphate from D-ribose 5-phosphate (route I): step 1/1. Functionally, involved in the biosynthesis of the central metabolite phospho-alpha-D-ribosyl-1-pyrophosphate (PRPP) via the transfer of pyrophosphoryl group from ATP to 1-hydroxyl of ribose-5-phosphate (Rib-5-P). The protein is Ribose-phosphate pyrophosphokinase of Prochlorococcus marinus (strain SARG / CCMP1375 / SS120).